The following is a 226-amino-acid chain: NADH-ubiquinone oxidoreductase 19.3 kDa subunit, mitochondrial (226 aa).

The segment at 40 to 68 is disordered; that stretch reads ATGAVAPAGAQHGIARRERREVPLPSQEG. [4Fe-4S] cluster-binding residues include Cys-101, Cys-102, Cys-166, and Cys-196.

It belongs to the complex I 20 kDa subunit family. Complex I is composed of about 40 different subunits. This is a component of the iron-sulfur (IP) fragment of the enzyme. [4Fe-4S] cluster is required as a cofactor.

The protein resides in the mitochondrion. It carries out the reaction a ubiquinone + NADH + 5 H(+)(in) = a ubiquinol + NAD(+) + 4 H(+)(out). Functionally, core subunit of the mitochondrial membrane respiratory chain NADH dehydrogenase (Complex I) that is believed to belong to the minimal assembly required for catalysis. Complex I functions in the transfer of electrons from NADH to the respiratory chain. The immediate electron acceptor for the enzyme is believed to be ubiquinone. The polypeptide is NADH-ubiquinone oxidoreductase 19.3 kDa subunit, mitochondrial (Neurospora crassa (strain ATCC 24698 / 74-OR23-1A / CBS 708.71 / DSM 1257 / FGSC 987)).